Reading from the N-terminus, the 251-residue chain is ATP synthase subunit a (251 aa).

Transmembrane regions (helical) follow at residues 29–49 (FTQS…ITLV), 56–73 (LVPG…EFIA), 87–107 (FVPL…FGMI), 117–137 (IIVT…YGFM), 159–181 (LIVA…RLFA), 192–212 (IFAG…LSPL), and 218–238 (VAIT…FATL).

Belongs to the ATPase A chain family. F-type ATPases have 2 components, CF(1) - the catalytic core - and CF(0) - the membrane proton channel. CF(1) has five subunits: alpha(3), beta(3), gamma(1), delta(1), epsilon(1). CF(0) has three main subunits: a(1), b(2) and c(9-12). The alpha and beta chains form an alternating ring which encloses part of the gamma chain. CF(1) is attached to CF(0) by a central stalk formed by the gamma and epsilon chains, while a peripheral stalk is formed by the delta and b chains.

The protein localises to the cell inner membrane. Functionally, key component of the proton channel; it plays a direct role in the translocation of protons across the membrane. The sequence is that of ATP synthase subunit a from Methylobacterium sp. (strain 4-46).